The primary structure comprises 308 residues: D-alanine--D-alanine ligase (308 aa).

One can recognise an ATP-grasp domain in the interval 102–302 (KHVAKAAGIP…FGEFLRWMVE (201 aa)). 128-183 (PMKPPYVVKPVREGSSFGVVIVKEDQSHPPQVITSSEWRYGDRVMVERYIAGREFT) provides a ligand contact to ATP. Mg(2+) contacts are provided by aspartate 252, glutamate 269, and asparagine 271.

The protein belongs to the D-alanine--D-alanine ligase family. Requires Mg(2+) as cofactor. Mn(2+) serves as cofactor.

Its subcellular location is the cytoplasm. It carries out the reaction 2 D-alanine + ATP = D-alanyl-D-alanine + ADP + phosphate + H(+). It functions in the pathway cell wall biogenesis; peptidoglycan biosynthesis. Cell wall formation. In Rhizobium meliloti (strain 1021) (Ensifer meliloti), this protein is D-alanine--D-alanine ligase.